Reading from the N-terminus, the 494-residue chain is Chromosomal replication initiator protein DnaA (494 aa).

The domain I, interacts with DnaA modulators stretch occupies residues 1–103 (MTTDPDPPFV…PVSDESDSGS (103 aa)). The interval 94 to 117 (PVSDESDSGSVASPAPVAAADPDD) is disordered. Low complexity predominate over residues 101–113 (SGSVASPAPVAAA). Positions 104–153 (VASPAPVAAADPDDDVVDDDLAARASAEESWPSYFTNRANRAAEDDATSV) are domain II. The tract at residues 154-370 (NLNRRYTFDT…GALIRVTAFA (217 aa)) is domain III, AAA+ region. Residues G198, G200, K201, and T202 each coordinate ATP. Residues 371-494 (SLNKTPIDKS…TTRIRQRAKR (124 aa)) are domain IV, binds dsDNA.

Belongs to the DnaA family. In terms of assembly, oligomerizes as a right-handed, spiral filament on DNA at oriC.

Its subcellular location is the cytoplasm. In terms of biological role, plays an essential role in the initiation and regulation of chromosomal replication. ATP-DnaA binds to the origin of replication (oriC) to initiate formation of the DNA replication initiation complex once per cell cycle. Binds the DnaA box (a 9 base pair repeat at the origin) and separates the double-stranded (ds)DNA. Forms a right-handed helical filament on oriC DNA; dsDNA binds to the exterior of the filament while single-stranded (ss)DNA is stabiized in the filament's interior. The ATP-DnaA-oriC complex binds and stabilizes one strand of the AT-rich DNA unwinding element (DUE), permitting loading of DNA polymerase. After initiation quickly degrades to an ADP-DnaA complex that is not apt for DNA replication. Binds acidic phospholipids. This Mycolicibacterium vanbaalenii (strain DSM 7251 / JCM 13017 / BCRC 16820 / KCTC 9966 / NRRL B-24157 / PYR-1) (Mycobacterium vanbaalenii) protein is Chromosomal replication initiator protein DnaA.